Consider the following 640-residue polypeptide: uncharacterized protein (640 aa).

The next 14 helical transmembrane spans lie at 8-28, 52-72, 90-110, 136-156, 179-199, 208-228, 241-261, 277-297, 298-318, 352-372, 391-411, 446-466, 497-517, and 619-639; these read GGVV…LGMF, LGGF…CYLI, LFVA…FLLA, LWYA…LVVL, VFML…LHAW, PSPV…YGIV, WWGL…VLQA, ENMG…DTGA, YGPA…HAAF, TVFF…AGFV, IVAL…GLSV, AIAA…APMV, IAPG…AVLA, and GSVH…LVVA.

It belongs to the complex I subunit 4 family.

The protein localises to the cell membrane. This is an uncharacterized protein from Mycobacterium tuberculosis (strain CDC 1551 / Oshkosh).